The sequence spans 264 residues: UPF0162 protein PM0557 (264 aa).

The protein belongs to the UPF0162 family.

This Pasteurella multocida (strain Pm70) protein is UPF0162 protein PM0557.